The sequence spans 384 residues: Chaperone protein DnaJ (384 aa).

In terms of domain architecture, J spans 5-70 (DYYEILGVTR…QKKRIYDTYG (66 aa)). A CR-type zinc finger spans residues 134 to 212 (GTEKEIRLQT…CNGQGRTRQS (79 aa)). Residues Cys147, Cys150, Cys164, Cys167, Cys186, Cys189, Cys200, and Cys203 each contribute to the Zn(2+) site. 4 CXXCXGXG motif repeats span residues 147 to 154 (CEECNGSG), 164 to 171 (CPVCQGSG), 186 to 193 (CTRCQGMG), and 200 to 207 (CKTCNGQG). The disordered stretch occupies residues 352-384 (KEKSGEKVRKWPWSKRKDREKKSMAESTREART).

This sequence belongs to the DnaJ family. As to quaternary structure, homodimer. The cofactor is Zn(2+).

Its subcellular location is the cytoplasm. Functionally, participates actively in the response to hyperosmotic and heat shock by preventing the aggregation of stress-denatured proteins and by disaggregating proteins, also in an autonomous, DnaK-independent fashion. Unfolded proteins bind initially to DnaJ; upon interaction with the DnaJ-bound protein, DnaK hydrolyzes its bound ATP, resulting in the formation of a stable complex. GrpE releases ADP from DnaK; ATP binding to DnaK triggers the release of the substrate protein, thus completing the reaction cycle. Several rounds of ATP-dependent interactions between DnaJ, DnaK and GrpE are required for fully efficient folding. Also involved, together with DnaK and GrpE, in the DNA replication of plasmids through activation of initiation proteins. The sequence is that of Chaperone protein DnaJ from Syntrophobacter fumaroxidans (strain DSM 10017 / MPOB).